Consider the following 59-residue polypeptide: Large ribosomal subunit protein uL30 (59 aa).

This sequence belongs to the universal ribosomal protein uL30 family. In terms of assembly, part of the 50S ribosomal subunit.

This is Large ribosomal subunit protein uL30 from Bacillus subtilis (strain 168).